We begin with the raw amino-acid sequence, 283 residues long: Thymidylate synthase (283 aa).

R22 contributes to the dUMP binding site. The active-site Nucleophile is the C160. Residues 180 to 183, N191, and 221 to 223 each bind dUMP; these read RSCD and HIY. (6R)-5,10-methylene-5,6,7,8-tetrahydrofolate is bound at residue D183. A (6R)-5,10-methylene-5,6,7,8-tetrahydrofolate-binding site is contributed by S282.

This sequence belongs to the thymidylate synthase family. Bacterial-type ThyA subfamily. In terms of assembly, homodimer.

The protein resides in the cytoplasm. It carries out the reaction dUMP + (6R)-5,10-methylene-5,6,7,8-tetrahydrofolate = 7,8-dihydrofolate + dTMP. Its pathway is pyrimidine metabolism; dTTP biosynthesis. In terms of biological role, catalyzes the reductive methylation of 2'-deoxyuridine-5'-monophosphate (dUMP) to 2'-deoxythymidine-5'-monophosphate (dTMP) while utilizing 5,10-methylenetetrahydrofolate (mTHF) as the methyl donor and reductant in the reaction, yielding dihydrofolate (DHF) as a by-product. This enzymatic reaction provides an intracellular de novo source of dTMP, an essential precursor for DNA biosynthesis. In Shewanella sediminis (strain HAW-EB3), this protein is Thymidylate synthase.